A 145-amino-acid chain; its full sequence is Small ribosomal subunit protein eS19 (145 aa).

K23 is modified (N6-acetyllysine). Residue R67 is modified to Omega-N-methylarginine. 2 positions are modified to N6-acetyllysine: K111 and K115. Residue K143 is modified to N6-succinyllysine.

Belongs to the eukaryotic ribosomal protein eS19 family. Component of the small ribosomal subunit. Part of the small subunit (SSU) processome, composed of more than 70 proteins and the RNA chaperone small nucleolar RNA (snoRNA) U3. Interacts with RPS19BP1; the interaction is direct and mediates the integration of RPS19 in state post-A1. Interacts with RPS19BP1.

Its subcellular location is the cytoplasm. It localises to the nucleus. The protein localises to the nucleolus. Component of the small ribosomal subunit. The ribosome is a large ribonucleoprotein complex responsible for the synthesis of proteins in the cell. Required for pre-rRNA processing and maturation of 40S ribosomal subunits. Part of the small subunit (SSU) processome, first precursor of the small eukaryotic ribosomal subunit. During the assembly of the SSU processome in the nucleolus, many ribosome biogenesis factors, an RNA chaperone and ribosomal proteins associate with the nascent pre-rRNA and work in concert to generate RNA folding, modifications, rearrangements and cleavage as well as targeted degradation of pre-ribosomal RNA by the RNA exosome. The sequence is that of Small ribosomal subunit protein eS19 (RPS19) from Oryctolagus cuniculus (Rabbit).